A 172-amino-acid chain; its full sequence is Epithelial membrane protein 2 (172 aa).

Helical transmembrane passes span 1–21, 72–92, 100–120, and 148–168; these read MLVI…LLFI, TMIL…LQLF, FVLT…GASV, and FILA…YMIL.

This sequence belongs to the PMP-22/EMP/MP20 family. Interacts with PTK2; regulates PTK2 activation and localization. Interacts with ITGB3; regulates the levels of the heterodimer ITGA5-ITGB3 integrin surface expression. Interacts with P2RX7 (via C-terminus). Interacts with ITGB1; the interaction may be direct or indirect and ITGB1 has a heterodimer form. Expressed in glomeruli.

It localises to the golgi apparatus membrane. Its subcellular location is the cell membrane. The protein resides in the apical cell membrane. It is found in the membrane raft. The protein localises to the cytoplasm. It localises to the nucleus. Its subcellular location is the perinuclear region. Functionally, functions as a key regulator of cell membrane composition by regulating protein surface expression. Also, plays a role in regulation of processes including cell migration, cell proliferation, cell contraction and cell adhesion. Regulates transepithelial migration of neutrophils into the alveolar lumen, potentially via mediation of cell surface expression of adhesion markers and lipid raft formation. Negatively regulates caveolae formation by reducing CAV1 expression and CAV1 amount by increasing lysosomal degradation. Facilitates surface trafficking and the formation of lipid rafts bearing GPI-anchor proteins. Regulates surface expression of MHC1 and ICAM1 proteins increasing susceptibility to T-cell mediated cytotoxicity. Regulates the plasma membrane expression of the integrin heterodimers ITGA6-ITGB1, ITGA5-ITGB3 and ITGA5-ITGB1 resulting in modulation of cell-matrix adhesion. Also regulates many processes through PTK2. Regulates blood vessel endothelial cell migration and angiogenesis by regulating VEGF protein expression through PTK2 activation. Regulates cell migration and cell contraction through PTK2 and SRC activation. Regulates focal adhesion density, F-actin conformation and cell adhesion capacity through interaction with PTK2. Positively regulates cell proliferation. Plays a role during cell death and cell blebbing. Promotes angiogenesis and vasculogenesis through induction of VEGFA via a HIF1A-dependent pathway. Also plays a role in embryo implantation by regulating surface trafficking of integrin heterodimer ITGA5-ITGB3. Plays a role in placental angiogenesis and uterine natural killer cell regulation at the maternal-fetal placental interface, however not required in the maternal tissues for a viable pregnancy. Involved in the early stages of embryogenic development and cardiogenesis, potentially via regulation of epithelial-mesenchymal transition timing. May play a role in glomerular filtration. The polypeptide is Epithelial membrane protein 2 (Emp2) (Rattus norvegicus (Rat)).